We begin with the raw amino-acid sequence, 428 residues long: Acylglycerol kinase, mitochondrial (428 aa).

Residues serine 18 to glycine 34 form a hydrophobic region. A DAGKc domain is found at serine 61 to glutamine 202.

It belongs to the AGK family. As to quaternary structure, component of the TIM22 complex. Requires Mg(2+) as cofactor.

The protein localises to the mitochondrion inner membrane. The protein resides in the mitochondrion intermembrane space. It carries out the reaction a monoacylglycerol + ATP = a monoacyl-sn-glycero-3-phosphate + ADP + H(+). The catalysed reaction is a 1,2-diacyl-sn-glycerol + ATP = a 1,2-diacyl-sn-glycero-3-phosphate + ADP + H(+). The enzyme catalyses an N-acylsphing-4-enine + ATP = an N-acylsphing-4-enine 1-phosphate + ADP + H(+). It catalyses the reaction 1-(9Z-octadecenoyl)-sn-glycerol + ATP = 1-(9Z-octadecenoyl)-sn-glycero-3-phosphate + ADP + H(+). It carries out the reaction 1,2-di-(9Z-octadecenoyl)-sn-glycerol + ATP = 1,2-di-(9Z-octadecenoyl)-sn-glycero-3-phosphate + ADP + H(+). The catalysed reaction is a 1-acyl-sn-glycerol + ATP = a 1-acyl-sn-glycero-3-phosphate + ADP + H(+). The enzyme catalyses 1-hexadecanoyl-sn-glycerol + ATP = 1-hexadecanoyl-sn-glycero-3-phosphate + ADP + H(+). It catalyses the reaction a 2-acylglycerol + ATP = a 2-acyl-sn-glycerol 3-phosphate + ADP + H(+). It carries out the reaction 2-(5Z,8Z,11Z,14Z-eicosatetraenoyl)-glycerol + ATP = 2-(5Z,8Z,11Z,14Z-eicosatetraenoyl)-sn-glycero-3-phosphate + ADP + H(+). The catalysed reaction is 1-(5Z,8Z,11Z,14Z-eicosatetraenoyl)-sn-glycerol + ATP = 1-(5Z,8Z,11Z,14Z-eicosatetraenoyl)-sn-glycero-3-phosphate + ADP + H(+). The enzyme catalyses N-(hexanoyl)sphing-4-enine + ATP = N-hexanoylsphing-4-enine 1-phosphate + ADP + H(+). Its pathway is lipid metabolism; glycerolipid metabolism. Functionally, lipid kinase that can phosphorylate both monoacylglycerol and diacylglycerol to form lysophosphatidic acid (LPA) and phosphatidic acid (PA), respectively. Phosphorylates ceramide but not sphingosine. Phosphorylates 1,2-dioleoylglycerol more rapidly than 2,3-dioleoylglycerol. Independently of its lipid kinase activity, acts as a component of the TIM22 complex. The TIM22 complex mediates the import and insertion of multi-pass transmembrane proteins into the mitochondrial inner membrane by forming a twin-pore translocase that uses the membrane potential as the external driving force. The chain is Acylglycerol kinase, mitochondrial from Xenopus laevis (African clawed frog).